The following is a 213-amino-acid chain: ATP phosphoribosyltransferase (213 aa).

It belongs to the ATP phosphoribosyltransferase family. Short subfamily. In terms of assembly, heteromultimer composed of HisG and HisZ subunits.

It localises to the cytoplasm. It catalyses the reaction 1-(5-phospho-beta-D-ribosyl)-ATP + diphosphate = 5-phospho-alpha-D-ribose 1-diphosphate + ATP. It participates in amino-acid biosynthesis; L-histidine biosynthesis; L-histidine from 5-phospho-alpha-D-ribose 1-diphosphate: step 1/9. Catalyzes the condensation of ATP and 5-phosphoribose 1-diphosphate to form N'-(5'-phosphoribosyl)-ATP (PR-ATP). Has a crucial role in the pathway because the rate of histidine biosynthesis seems to be controlled primarily by regulation of HisG enzymatic activity. The polypeptide is ATP phosphoribosyltransferase (Bacillus velezensis (strain DSM 23117 / BGSC 10A6 / LMG 26770 / FZB42) (Bacillus amyloliquefaciens subsp. plantarum)).